A 64-amino-acid chain; its full sequence is Large ribosomal subunit protein bL28 (64 aa).

Residues 1–23 (MARKDQISHRGPLSGNNRSHALN) form a disordered region.

It belongs to the bacterial ribosomal protein bL28 family.

This Mesomycoplasma hyopneumoniae (strain J / ATCC 25934 / NCTC 10110) (Mycoplasma hyopneumoniae) protein is Large ribosomal subunit protein bL28.